The sequence spans 270 residues: Probable septum site-determining protein MinC (270 aa).

The disordered stretch occupies residues 105-129 (DRRAPSSKAADEAPVQQAEPAAPAA). Over residues 116–129 (EAPVQQAEPAAPAA) the composition is skewed to low complexity.

It belongs to the MinC family. Interacts with MinD and FtsZ.

Functionally, cell division inhibitor that blocks the formation of polar Z ring septums. Rapidly oscillates between the poles of the cell to destabilize FtsZ filaments that have formed before they mature into polar Z rings. Prevents FtsZ polymerization. The chain is Probable septum site-determining protein MinC from Burkholderia pseudomallei (strain 1106a).